A 441-amino-acid chain; its full sequence is Myocyte-specific enhancer factor 2C (441 aa).

The region spanning 1–61 (MGRKKIQITR…NKLFQYASTD (61 aa)) is the MADS-box domain. The residue at position 4 (Lys-4) is an N6-acetyllysine. A DNA-binding region (mef2-type) is located at residues 58 to 86 (ASTDMDKVLLKYTEYNEPHESRTNSDIVE). Ser-59 is subject to Phosphoserine; by CK2. Residues 91–116 (KGLNGCDSPDPDADDSVGHSPESEDK) are disordered. Residues Ser-98, Ser-106, and Ser-110 each carry the phosphoserine modification. N6-acetyllysine is present on residues Lys-116 and Lys-119. Positions 180 to 224 (NSMSPGVTHRPPSAGNTGGLMGGDLTSGAGTSAGNGYGNPRNSPG) are disordered. Phosphoserine is present on residues Ser-222 and Ser-228. Residues Lys-234 and Lys-239 each carry the N6-acetyllysine modification. Phosphoserine is present on Ser-240. N6-acetyllysine occurs at positions 252 and 264. Residues 271–278 (SEDVDLLL) form a beta domain region. Residues Thr-293 and Thr-300 each carry the phosphothreonine; by MAPK7 and MAPK14 modification. Residues 353 to 441 (QHLHSMPPSA…RMRLSEGWAT (89 aa)) are disordered. Over residues 362–377 (ALSQLGDRTTTPSRYP) the composition is skewed to polar residues. Ser-387 carries the post-translational modification Phosphoserine; by MAPK7. A compositionally biased stretch (low complexity) spans 387–400 (SPVDSLSSCSSSYD). A compositionally biased stretch (basic and acidic residues) spans 401–411 (GSDREDHRNEF). Position 413 is a phosphoserine (Ser-413).

It belongs to the MEF2 family. In terms of assembly, forms a complex with class II HDACs in undifferentiating cells. On myogenic differentiation, HDACs are released into the cytoplasm allowing MEF2s to interact with other proteins for activation. Interacts with EP300 in differentiating cells; the interaction acetylates MEF2C leading to increased DNA binding and activation. Interacts with HDAC7 and CARM1. Interacts with HDAC4, HDAC7 and HDAC9; the interaction with HDACs represses transcriptional activity. Interacts with LPIN1. Interacts with MYOCD. Interacts with AKAP13. Interacts with FOXK1; the interaction inhibits MEF2C transactivation activity. Interacts (via N-terminus) with HABP4; this interaction decreases DNA-binding activity of MEF2C in myocardial cells in response to mechanical stress. Interacts with JPH2; interaction specifically takes place with the Junctophilin-2 N-terminal fragment cleavage product of JPH2. Interacts (via MADS box) with SOX18. Interacts with PHF7; the interaction promotes MEF2C binding to its transcription targets. Post-translationally, phosphorylation on Ser-59 enhances DNA binding activity. Acetylated by p300 on several sites in diffentiating myocytes. Acetylation on Lys-4 increases DNA binding and transactivation. In terms of processing, proteolytically cleaved in cerebellar granule neurons, probably by caspase 7, following neurotoxicity.

It is found in the nucleus. Its subcellular location is the cytoplasm. The protein resides in the sarcoplasm. In terms of biological role, transcription activator which binds specifically to the MEF2 element present in the regulatory regions of many muscle-specific genes. Controls cardiac morphogenesis and myogenesis, and is also involved in vascular development. Enhances transcriptional activation mediated by SOX18. Plays an essential role in hippocampal-dependent learning and memory by suppressing the number of excitatory synapses and thus regulating basal and evoked synaptic transmission. Crucial for normal neuronal development, distribution, and electrical activity in the neocortex. Necessary for proper development of megakaryocytes and platelets and for bone marrow B-lymphopoiesis. Required for B-cell survival and proliferation in response to BCR stimulation, efficient IgG1 antibody responses to T-cell-dependent antigens and for normal induction of germinal center B-cells. May also be involved in neurogenesis and in the development of cortical architecture. The protein is Myocyte-specific enhancer factor 2C of Bos taurus (Bovine).